The sequence spans 301 residues: Glycine--tRNA ligase alpha subunit (301 aa).

The protein belongs to the class-II aminoacyl-tRNA synthetase family. In terms of assembly, tetramer of two alpha and two beta subunits.

It is found in the cytoplasm. The enzyme catalyses tRNA(Gly) + glycine + ATP = glycyl-tRNA(Gly) + AMP + diphosphate. The protein is Glycine--tRNA ligase alpha subunit of Shewanella amazonensis (strain ATCC BAA-1098 / SB2B).